The primary structure comprises 505 residues: Protein MGF 505-4R (505 aa).

Belongs to the asfivirus MGF 505 family.

Plays a role in virus cell tropism, and may be required for efficient virus replication in macrophages. The sequence is that of Protein MGF 505-4R from Ornithodoros (relapsing fever ticks).